Consider the following 231-residue polypeptide: Two-component response regulator ORR1 (231 aa).

Residues 9-135 enclose the Response regulatory domain; sequence RVLLVDDSPV…DVQRLRNCSP (127 aa). A 4-aspartylphosphate modification is found at aspartate 68.

The protein belongs to the ARR family. Type-A subfamily. Two-component system major event consists of a His-to-Asp phosphorelay between a sensor histidine kinase (HK) and a response regulator (RR). In plants, the His-to-Asp phosphorelay involves an additional intermediate named Histidine-containing phosphotransfer protein (HPt). This multistep phosphorelay consists of a His-Asp-His-Asp sequential transfer of a phosphate group between first a His and an Asp of the HK protein, followed by the transfer to a conserved His of the HPt protein and finally the transfer to an Asp in the receiver domain of the RR protein. As to expression, expressed in roots, leaf blades, leaf sheaths, shoot apex, flowers and panicles.

Functionally, functions as a response regulator involved in His-to-Asp phosphorelay signal transduction system. Phosphorylation of the Asp residue in the receiver domain activates the ability of the protein to promote the transcription of target genes. Type-A response regulators seem to act as negative regulators of the cytokinin signaling. Involved in adventitious (crown) root initiation under the regulation of CRL5. The polypeptide is Two-component response regulator ORR1 (Oryza sativa subsp. japonica (Rice)).